Here is a 263-residue protein sequence, read N- to C-terminus: Pyrrolysine synthase (263 aa).

L-pyrrolysine contacts are provided by Leu8, Val57, Ile64, and Ala107. Residues Lys155, Val156, Asp175, Cys210, Pro228, Ile230, and Glu249 each coordinate NAD(+).

Belongs to the PylD family.

The enzyme catalyses (3R)-3-methyl-D-ornithyl-N(6)-L-lysine + NAD(+) = L-pyrrolysine + NH4(+) + NADH + 2 H(+). Its pathway is amino-acid biosynthesis; L-pyrrolysine biosynthesis. Its function is as follows. Catalyzes the ultimate step of the pyrrolysine biosynthesis pathway by converting the isopeptide (3R)-3-methyl-D-ornithyl-N(6)-L-lysine to the 22nd proteinogenic amino acid. Is able to use surrogate substrates such as (3R)-D-ornithyl-N(6)-L-lysine in vitro. The chain is Pyrrolysine synthase from Methanosarcina barkeri (strain Fusaro / DSM 804).